A 188-amino-acid chain; its full sequence is dCTP deaminase (188 aa).

A dCTP-binding site is contributed by 109–114; that stretch reads KSTYAR. Glutamate 135 (proton donor/acceptor) is an active-site residue. The dCTP site is built by glutamine 154, tyrosine 168, and glutamine 178.

Belongs to the dCTP deaminase family. Homotrimer.

The enzyme catalyses dCTP + H2O + H(+) = dUTP + NH4(+). It participates in pyrimidine metabolism; dUMP biosynthesis; dUMP from dCTP (dUTP route): step 1/2. Catalyzes the deamination of dCTP to dUTP. The sequence is that of dCTP deaminase from Helicobacter pylori (strain P12).